The sequence spans 126 residues: Adenosine 5'-monophosphoramidase HINT1 (126 aa).

The residue at position 2 (A2) is an N-acetylalanine. The 109-residue stretch at 18 to 126 folds into the HIT domain; it reads IFGKIIRKEI…GGRQMHWPPG (109 aa). An N6-acetyllysine mark is found at K21 and K30. 43-44 is an AMP binding site; the sequence is DI. Phosphoserine occurs at positions 45 and 72. AMP is bound by residues N99, 105 to 107, and 112 to 114; these read GQS and HLH. Residues 110–114 carry the Histidine triad motif motif; that stretch reads HVHLH. Catalysis depends on H112, which acts as the Tele-AMP-histidine intermediate.

The protein belongs to the HINT family. In terms of assembly, homodimer. Interacts with CDK7. Interacts with RUVBL1 and RUVBL2 and is associated with the LEF1/TCF1-CTNNB1 complex and with a KAT5 histone acetyltransferase complex. Identified in a complex with MITF and CTNNB1. Interacts with CDC34 and RBX1, and is part of a SCF (SKP2-CUL1-F-box protein) E3 ubiquitin-protein ligase complex. Interacts with SUMO1, SUMO2 and RGS17. Interacts with the Ten-1 ICD form of TENM1. Interacts with CALM1; interaction increases in the presence of calcium ions. Widely expressed.

The protein localises to the cytoplasm. It is found in the nucleus. The catalysed reaction is adenosine 5'-phosphoramidate + H2O = AMP + NH4(+). Its function is as follows. Exhibits adenosine 5'-monophosphoramidase activity, hydrolyzing purine nucleotide phosphoramidates with a single phosphate group such as adenosine 5'monophosphoramidate (AMP-NH2) to yield AMP and NH2. Hydrolyzes adenosine 5'monophosphomorpholidate (AMP-morpholidate) and guanosine 5'monophosphomorpholidate (GMP-morpholidate). Hydrolyzes lysyl-AMP (AMP-N-epsilon-(N-alpha-acetyl lysine methyl ester)) generated by lysine tRNA ligase, as well as Met-AMP, His-AMP and Asp-AMP, lysyl-GMP (GMP-N-epsilon-(N-alpha-acetyl lysine methyl ester)) and AMP-N-alanine methyl ester. Hydrolyzes 3-indolepropionic acyl-adenylate, tryptamine adenosine phosphoramidate monoester and other fluorogenic purine nucleoside tryptamine phosphoramidates in vitro. Can also convert adenosine 5'-O-phosphorothioate and guanosine 5'-O-phosphorothioate to the corresponding nucleoside 5'-O-phosphates with concomitant release of hydrogen sulfide. In addition, functions as scaffolding protein that modulates transcriptional activation by the LEF1/TCF1-CTNNB1 complex and by the complex formed with MITF and CTNNB1. Modulates p53/TP53 levels and p53/TP53-mediated apoptosis. Modulates proteasomal degradation of target proteins by the SCF (SKP2-CUL1-F-box protein) E3 ubiquitin-protein ligase complex. Also exhibits SUMO-specific isopeptidase activity, deconjugating SUMO1 from RGS17. Deconjugates SUMO1 from RANGAP1. The sequence is that of Adenosine 5'-monophosphoramidase HINT1 (HINT1) from Homo sapiens (Human).